The primary structure comprises 750 residues: Cation-transporting P-type ATPase B (750 aa).

Residues 17 to 80 (RRIQLDVAGM…VIEQAGYRAT (64 aa)) enclose the HMA domain. The a metal cation site is built by Cys-28 and Cys-31. 6 consecutive transmembrane segments (helical) span residues 104–124 (LIVA…FAIV), 129–149 (FPGW…WAAW), 167–187 (ETLI…TIFV), 200–220 (AILH…VFVL), 360–380 (IAAV…ASWL), and 389–409 (AFSV…GLAT). Asp-445 serves as the catalytic 4-aspartylphosphate intermediate. The next 6 helical transmembrane spans lie at 471–491 (VLAL…TAIV), 500–520 (VADF…EHHV), 547–567 (SRGE…AVAI), 663–683 (VAIG…VPVA), 693–713 (TIRI…PIAS), and 715–735 (GLLN…FVVS).

Belongs to the cation transport ATPase (P-type) (TC 3.A.3) family. Type IB subfamily.

The protein resides in the cell membrane. It carries out the reaction ATP + H2O = ADP + phosphate + H(+). In Mycobacterium leprae (strain TN), this protein is Cation-transporting P-type ATPase B (ctpB).